A 384-amino-acid polypeptide reads, in one-letter code: Cobalt-precorrin-5B C(1)-methyltransferase (384 aa).

It belongs to the CbiD family.

It carries out the reaction Co-precorrin-5B + S-adenosyl-L-methionine = Co-precorrin-6A + S-adenosyl-L-homocysteine. Its pathway is cofactor biosynthesis; adenosylcobalamin biosynthesis; cob(II)yrinate a,c-diamide from sirohydrochlorin (anaerobic route): step 6/10. Catalyzes the methylation of C-1 in cobalt-precorrin-5B to form cobalt-precorrin-6A. In Marinomonas sp. (strain MWYL1), this protein is Cobalt-precorrin-5B C(1)-methyltransferase.